Consider the following 197-residue polypeptide: Probable GTP-binding protein EngB (197 aa).

The region spanning 24 to 197 is the EngB-type G domain; it reads DIPEIALAGR…WDAILEKVNK (174 aa). Residues 32-39, 59-63, 77-80, 144-147, and 176-178 each bind GTP; these read GRSNVGKS, GKTQL, DVPG, TKAD, and FSS. Residues Ser-39 and Thr-61 each contribute to the Mg(2+) site.

It belongs to the TRAFAC class TrmE-Era-EngA-EngB-Septin-like GTPase superfamily. EngB GTPase family. The cofactor is Mg(2+).

Necessary for normal cell division and for the maintenance of normal septation. This Streptococcus gordonii (strain Challis / ATCC 35105 / BCRC 15272 / CH1 / DL1 / V288) protein is Probable GTP-binding protein EngB.